A 303-amino-acid polypeptide reads, in one-letter code: uncharacterized protein (303 aa).

The 60-residue stretch at 15-74 (ERIDKFLASTENDWSRTQVQQWVKDGQVVVNGSAVKANYKIQPGDQVTVTVPEPEALDVL) folds into the S4 RNA-binding domain. D138 is a catalytic residue.

The protein belongs to the pseudouridine synthase RluA family.

It catalyses the reaction a uridine in RNA = a pseudouridine in RNA. This is an uncharacterized protein from Bacillus subtilis (strain 168).